Here is a 446-residue protein sequence, read N- to C-terminus: tRNA-2-methylthio-N(6)-dimethylallyladenosine synthase (446 aa).

Positions 3–120 constitute an MTTase N-terminal domain; the sequence is KKLFIETHGC…LPEMIDAARS (118 aa). Cys12, Cys49, Cys83, Cys157, Cys161, and Cys164 together coordinate [4Fe-4S] cluster. In terms of domain architecture, Radical SAM core spans 143–375; that stretch reads RVDGPTAFVS…QSRIHQQGYE (233 aa). Residues 378 to 442 enclose the TRAM domain; that stretch reads RRMVGSTQRI…PHSLRGTLID (65 aa).

It belongs to the methylthiotransferase family. MiaB subfamily. In terms of assembly, monomer. [4Fe-4S] cluster serves as cofactor.

It localises to the cytoplasm. The catalysed reaction is N(6)-dimethylallyladenosine(37) in tRNA + (sulfur carrier)-SH + AH2 + 2 S-adenosyl-L-methionine = 2-methylsulfanyl-N(6)-dimethylallyladenosine(37) in tRNA + (sulfur carrier)-H + 5'-deoxyadenosine + L-methionine + A + S-adenosyl-L-homocysteine + 2 H(+). Catalyzes the methylthiolation of N6-(dimethylallyl)adenosine (i(6)A), leading to the formation of 2-methylthio-N6-(dimethylallyl)adenosine (ms(2)i(6)A) at position 37 in tRNAs that read codons beginning with uridine. In Pseudomonas aeruginosa (strain UCBPP-PA14), this protein is tRNA-2-methylthio-N(6)-dimethylallyladenosine synthase.